Here is a 245-residue protein sequence, read N- to C-terminus: Eukaryotic translation initiation factor 4E type 2 (245 aa).

Basic and acidic residues predominate over residues 1-38; the sequence is MNNKFDALKDDDSGDHDQNEENSTQKDGEKEKTDRDKS. The tract at residues 1 to 52 is disordered; the sequence is MNNKFDALKDDDSGDHDQNEENSTQKDGEKEKTDRDKSQSSGKRKAVVPGPA. A Phosphoserine modification is found at serine 13. Residues 54–57 are EIF4EBP1/2/3 binding; sequence HPLQ. 78–79 contributes to the mRNA binding site; sequence YE. The interval 95-99 is EIF4EBP1/2/3 binding; sequence WKFYS. MRNA is bound by residues histidine 110 and 124 to 125; that span reads WE. Lysine 134 is modified (N6-acetyllysine; alternate). A Glycyl lysine isopeptide (Lys-Gly) (interchain with G-Cter in ISG15); alternate cross-link involves residue lysine 134. The EIF4EBP1/2/3 binding stretch occupies residues 150 to 157; sequence NLILAMLG. MRNA contacts are provided by residues 174–179 and 222–224; these read RFQEDI and KMP. Lysine 222 participates in a covalent cross-link: Glycyl lysine isopeptide (Lys-Gly) (interchain with G-Cter in ISG15).

It belongs to the eukaryotic initiation factor 4E family. In terms of assembly, interacts with EIF4EBP1, EIF4EBP2 and EIF4EBP3. Does not interact with eIF4G (EIF4G1, EIF4G2 or EIF4G3). Component of the 4EHP-GYF2 complex, at least composed of EIF4E2, GIGYF2 and ZNF598. Interacts with GIGYF2 (via the 4EHP-binding motif); the interaction is direct. Interacts with EIF4ENIF1/4E-T (via YXXXXLphi motif); increasing affinity for the 7-methylguanosine-containing mRNA cap. Post-translationally, ubiquitinated by ARIH1. The consequences of ubiquitination are however unclear: according to a report, EIF4E2 ubiquitination leads to promote EIF4E2 cap-binding and protein translation arrest. According to another report ubiquitination leads to its subsequent degradation. In terms of processing, ISGylation enhances its cap structure-binding activity and translation-inhibition activity. In terms of tissue distribution, widely expressed with highest levels in testis, kidney and liver.

The protein localises to the cytoplasm. It is found in the P-body. Its function is as follows. Recognizes and binds the 7-methylguanosine-containing mRNA cap during an early step in the initiation. Acts as a repressor of translation initiation. In contrast to EIF4E, it is unable to bind eIF4G (EIF4G1, EIF4G2 or EIF4G3), suggesting that it acts by competing with EIF4E and block assembly of eIF4F at the cap. In P-bodies, component of a complex that promotes miRNA-mediated translational repression. Involved in virus-induced host response by mediating miRNA MIR34A-induced translational silencing which controls IFNB1 production by a negative feedback mechanism. In terms of biological role, component of the 4EHP-GYF2 complex, a multiprotein complex that acts as a repressor of translation initiation. In association with GIGYF2, assists ribosome-associated quality control (RQC) by sequestering the mRNA cap, blocking ribosome initiation and decreasing the translational load on problematic messages. Part of a pathway that works in parallel to RQC-mediated degradation of the stalled nascent polypeptide. GIGYF2 and EIF4E2 work downstream and independently of ZNF598, which seems to work as a scaffold that can recruit them to faulty mRNA even if alternative recruitment mechanisms may exist. The polypeptide is Eukaryotic translation initiation factor 4E type 2 (Mus musculus (Mouse)).